Consider the following 434-residue polypeptide: Nicotinate phosphoribosyltransferase (434 aa).

H242 is modified (phosphohistidine; by autocatalysis).

This sequence belongs to the NAPRTase family. Transiently phosphorylated on a His residue during the reaction cycle. Phosphorylation strongly increases the affinity for substrates and increases the rate of nicotinate D-ribonucleotide production. Dephosphorylation regenerates the low-affinity form of the enzyme, leading to product release.

The enzyme catalyses nicotinate + 5-phospho-alpha-D-ribose 1-diphosphate + ATP + H2O = nicotinate beta-D-ribonucleotide + ADP + phosphate + diphosphate. It participates in cofactor biosynthesis; NAD(+) biosynthesis; nicotinate D-ribonucleotide from nicotinate: step 1/1. In terms of biological role, catalyzes the synthesis of beta-nicotinate D-ribonucleotide from nicotinate and 5-phospho-D-ribose 1-phosphate at the expense of ATP. This is Nicotinate phosphoribosyltransferase from Rhizobium leguminosarum bv. trifolii (strain WSM2304).